We begin with the raw amino-acid sequence, 103 residues long: NAD(P)H-quinone oxidoreductase subunit 4L (103 aa).

3 consecutive transmembrane segments (helical) span residues 5–25 (LQYC…GLIT), 32–52 (VLMS…GFSN), and 66–86 (IFVI…VLAI).

Belongs to the complex I subunit 4L family. As to quaternary structure, NDH-1 can be composed of about 15 different subunits; different subcomplexes with different compositions have been identified which probably have different functions.

It localises to the cellular thylakoid membrane. The catalysed reaction is a plastoquinone + NADH + (n+1) H(+)(in) = a plastoquinol + NAD(+) + n H(+)(out). The enzyme catalyses a plastoquinone + NADPH + (n+1) H(+)(in) = a plastoquinol + NADP(+) + n H(+)(out). Its function is as follows. NDH-1 shuttles electrons from an unknown electron donor, via FMN and iron-sulfur (Fe-S) centers, to quinones in the respiratory and/or the photosynthetic chain. The immediate electron acceptor for the enzyme in this species is believed to be plastoquinone. Couples the redox reaction to proton translocation, and thus conserves the redox energy in a proton gradient. Cyanobacterial NDH-1 also plays a role in inorganic carbon-concentration. This chain is NAD(P)H-quinone oxidoreductase subunit 4L, found in Synechocystis sp. (strain ATCC 27184 / PCC 6803 / Kazusa).